The sequence spans 390 residues: MDTFLFTSESVNEGHPDKLCDQVSDAILDACLAQDPESKVACETCSKTNMVMVFGEITTKANVDYEKIVRDTCRGIGFTSADVGLDADNCKVLVNIEQQSPDIAQGVHGHLTKKPEEIGAGDQGHMFGYATDETPELMPLTHVLATKLGAKLTEVRKNKTCPWLRPDGKTQVTVEYKNEGGAMVPIRVHTILISTQHDENVTNEQIAADLKEHVIKPVIPVQYLDDKTIFHLNPSGRFVIGGPHGDAGLTGRKIIIDTYGGWGAHGGGAFSGKDPTKVDRSGAYIVRQAAKSVVASGLARRCIVQVSYAIGVPEPLSVFVDTYKTGKIPDRDILELIKENFDFRPGMIAINLDLMRGGNSRYQKTAAYGHFGRDDPDFTWETVKLLKPNA.

Mg(2+) is bound at residue Glu-9. Residue His-15 coordinates ATP. Glu-43 is a binding site for K(+). L-methionine contacts are provided by Glu-56 and Gln-99. ATP is bound by residues 167–169, 235–238, Asp-246, 252–253, Ala-269, Lys-273, and Lys-277; these read DGK, SGRF, and RK. Asp-246 provides a ligand contact to L-methionine. Lys-277 contributes to the L-methionine binding site.

Belongs to the AdoMet synthase family. In terms of assembly, homotetramer. The cofactor is Mn(2+). Requires Mg(2+) as cofactor. Co(2+) serves as cofactor. K(+) is required as a cofactor.

Its subcellular location is the cytoplasm. It carries out the reaction L-methionine + ATP + H2O = S-adenosyl-L-methionine + phosphate + diphosphate. The protein operates within amino-acid biosynthesis; S-adenosyl-L-methionine biosynthesis; S-adenosyl-L-methionine from L-methionine: step 1/1. Functionally, catalyzes the formation of S-adenosylmethionine from methionine and ATP. The reaction comprises two steps that are both catalyzed by the same enzyme: formation of S-adenosylmethionine (AdoMet) and triphosphate, and subsequent hydrolysis of the triphosphate. This chain is S-adenosylmethionine synthase 4 (METK4), found in Populus trichocarpa (Western balsam poplar).